The sequence spans 103 residues: MNHPNTDHQSDTLLSDINTQPPKRYGVFLLNDDYTTMEFVVEILTEVFMLAQEQAVAVMLLVHHEGKGLCGTYTRDIAQTKQHQVMERAKTEGHPLKCIVEEV.

This sequence belongs to the ClpS family. In terms of assembly, binds to the N-terminal domain of the chaperone ClpA.

In terms of biological role, involved in the modulation of the specificity of the ClpAP-mediated ATP-dependent protein degradation. The protein is ATP-dependent Clp protease adapter protein ClpS of Neisseria meningitidis serogroup A / serotype 4A (strain DSM 15465 / Z2491).